A 130-amino-acid chain; its full sequence is Small ribosomal subunit protein uS9 (130 aa).

The protein belongs to the universal ribosomal protein uS9 family.

The protein is Small ribosomal subunit protein uS9 of Shewanella piezotolerans (strain WP3 / JCM 13877).